Reading from the N-terminus, the 211-residue chain is Large ribosomal subunit protein bL25 (211 aa).

It belongs to the bacterial ribosomal protein bL25 family. CTC subfamily. As to quaternary structure, part of the 50S ribosomal subunit; part of the 5S rRNA/L5/L18/L25 subcomplex. Contacts the 5S rRNA. Binds to the 5S rRNA independently of L5 and L18.

Functionally, this is one of the proteins that binds to the 5S RNA in the ribosome where it forms part of the central protuberance. This Xanthomonas axonopodis pv. citri (strain 306) protein is Large ribosomal subunit protein bL25.